A 150-amino-acid polypeptide reads, in one-letter code: Large ribosomal subunit protein bL9 (150 aa).

The protein belongs to the bacterial ribosomal protein bL9 family.

Binds to the 23S rRNA. The polypeptide is Large ribosomal subunit protein bL9 (Delftia acidovorans (strain DSM 14801 / SPH-1)).